The chain runs to 110 residues: UPF0132 membrane protein MJ1443 (110 aa).

A run of 3 helical transmembrane segments spans residues 15–35 (IEGALCYLFGVITGILFYILE), 49–69 (IILFGGLWVLSIILAFIPYGW), and 70–90 (MLSGLVNLAAFILWIVCMYKA).

This sequence belongs to the UPF0132 family.

It localises to the cell membrane. In Methanocaldococcus jannaschii (strain ATCC 43067 / DSM 2661 / JAL-1 / JCM 10045 / NBRC 100440) (Methanococcus jannaschii), this protein is UPF0132 membrane protein MJ1443.